Here is a 67-residue protein sequence, read N- to C-terminus: Large ribosomal subunit protein bL35 (67 aa).

This sequence belongs to the bacterial ribosomal protein bL35 family.

In Brachyspira hyodysenteriae (strain ATCC 49526 / WA1), this protein is Large ribosomal subunit protein bL35.